Reading from the N-terminus, the 162-residue chain is uncharacterized protein (162 aa).

The signal sequence occupies residues Met1–Ala18.

It belongs to the fimbrial protein family.

Part of the yfcOPQRSUV fimbrial operon. Could contribute to adhesion to various surfaces in specific environmental niches. Increases adhesion to eukaryotic T24 bladder epithelial cells in the absence of fim genes. This is an uncharacterized protein from Escherichia coli (strain K12).